The sequence spans 147 residues: TRAP-T-associated universal stress protein TeaD (147 aa).

Residues 8–10 (PVD), valine 38, 117–122 (GAQGTN), and 131–133 (SVA) each bind ATP.

It belongs to the universal stress protein A family. In terms of assembly, homodimer or homotetramer; in equilibrium. The dimer/tetramer ratio is ATP-dependent. ATP stabilizes dimer-dimer complexes, with one ATP molecule bound to each monomer.

The protein resides in the cytoplasm. Functionally, ATP-binding protein that negatively regulates activity of the tripartite ATP-independent periplasmic (TRAP) ectoine transport system TeaABC. May regulate uptake according to the ATP status of the cell. The chain is TRAP-T-associated universal stress protein TeaD (teaD) from Halomonas elongata (strain ATCC 33173 / DSM 2581 / NBRC 15536 / NCIMB 2198 / 1H9).